An 88-amino-acid chain; its full sequence is Small ribosomal subunit protein bS20 (88 aa).

Positions 1–20 are disordered; it reads MPNIKSAIKRTKTNNERRAH.

The protein belongs to the bacterial ribosomal protein bS20 family.

In terms of biological role, binds directly to 16S ribosomal RNA. This chain is Small ribosomal subunit protein bS20, found in Bacillus velezensis (strain DSM 23117 / BGSC 10A6 / LMG 26770 / FZB42) (Bacillus amyloliquefaciens subsp. plantarum).